Consider the following 201-residue polypeptide: Recombination protein RecR (201 aa).

The C4-type zinc finger occupies 57–72; that stretch reads CADCRTFTEQEICTIC. A Toprim domain is found at 81-176; that stretch reads GLICVVESPA…DASRIAHGVP (96 aa).

Belongs to the RecR family.

Its function is as follows. May play a role in DNA repair. It seems to be involved in an RecBC-independent recombinational process of DNA repair. It may act with RecF and RecO. The chain is Recombination protein RecR from Erwinia tasmaniensis (strain DSM 17950 / CFBP 7177 / CIP 109463 / NCPPB 4357 / Et1/99).